Here is a 1240-residue protein sequence, read N- to C-terminus: RNA-directed RNA polymerase VP2 (1240 aa).

A RdRp catalytic domain is found at 516-764 (LVANYINKHM…KLYALFGARI (249 aa)).

This sequence belongs to the reoviridae RNA-directed RNA polymerase family.

The protein localises to the virion. It carries out the reaction RNA(n) + a ribonucleoside 5'-triphosphate = RNA(n+1) + diphosphate. In terms of biological role, RNA-directed RNA polymerase that is involved in transcription and genome replication. Following infection, it catalyzes the synthesis of fully conservative plus strands. After core assembly, which consists in recruitment of one capped plus-strand for each genomic segments and polymerase complexes, the polymerase switches mode and catalyzes the synthesis of complementary minus-strands. The protein is RNA-directed RNA polymerase VP2 (S2) of Oncorhynchus keta (Chum salmon).